The chain runs to 206 residues: Xanthine phosphoribosyltransferase (206 aa).

Xanthine is bound by residues Leu28 and Asn35. 136–140 (ANGQA) provides a ligand contact to 5-phospho-alpha-D-ribose 1-diphosphate. A xanthine-binding site is contributed by Lys164.

Belongs to the purine/pyrimidine phosphoribosyltransferase family. Xpt subfamily. As to quaternary structure, homodimer.

The protein resides in the cytoplasm. The catalysed reaction is XMP + diphosphate = xanthine + 5-phospho-alpha-D-ribose 1-diphosphate. It functions in the pathway purine metabolism; XMP biosynthesis via salvage pathway; XMP from xanthine: step 1/1. Its function is as follows. Converts the preformed base xanthine, a product of nucleic acid breakdown, to xanthosine 5'-monophosphate (XMP), so it can be reused for RNA or DNA synthesis. This chain is Xanthine phosphoribosyltransferase, found in Oenococcus oeni (strain ATCC BAA-331 / PSU-1).